The primary structure comprises 695 residues: MDLHSLLELGTKPTAPHVRNKKVILFDTNHQVSICNQIIDAINSGIDLGDLLEGGLLTLCVEHYYNSDKDKFNTSPIAKYLRDAGYEFDVIKNADATRFLDVIPNEPHYSPLILALKTLESTESQRGRIGLFLSFCSLFLPKLVVGDRASIEKALRQVTVHQEQGIVTYPNHWLTTGHMKVIFGILRSSFILKFVLIHQGVNLVTGHDAYDSIISNSVGQTRFSGLLIVKTVLEFILQKTDSGVTLHPLVRTSKVKNEVASFKQALSNLARHGEYAPFARVLNLSGINNLEHGLYPQLSAIALGVATAHGSTLAGVNVGEQYQQLREAAHDAEVKLQRRHEHQEIQAIAEDDEERKILEQFHLQKTEITHSQTLAVLSQKREKLARLAAEIENNIVEDQGFKQSQNRVSQSFLNDPTPVEVTVQARPVNRPTALPPPVDDKIEHESTEDSSSSSSFVDLNDPFALLNEDEDTLDDSVMIPSTTSREFQGIPESPGQSQDLDNSQGKQEDESTNPIKKQFLRYQELPPVQEDDESEYTTDSQESIDQPGSDNEQGVDLPPPPLYTQEKRQDPIQHPAASSQDPFGSIGDVNGDILEPIRSPSSPSAPQEDTRAREAYELSPDFTNYEDNQQNWPQRVVTKKGRTFLYPNDLLQTSPPESLVTALVEEYQNPVSAKELQADWPDMSFDERRHVAMNL.

Coiled coils occupy residues 316-341 and 372-399; these read VNVG…RRHE and QTLA…VEDQ. Disordered regions lie at residues 424–458 and 483–615; these read QARP…SFVD and TSRE…AREA. Basic and acidic residues predominate over residues 438–447; sequence VDDKIEHEST. Polar residues-rich tracts occupy residues 494–505 and 537–552; these read PGQSQDLDNSQG and TTDS…SDNE. The PTAP/PSAP motif motif lies at 603–606; the sequence is PSAP.

This sequence belongs to the filoviruses nucleoprotein family. In terms of assembly, homooligomer. Homomultimerizes to form the nucleocapsid. Binds to viral genomic RNA. Interacts with VP35 and VP30 to form the nucleocapsid. Also interacts with VP24 and VP40. Phosphorylated.

Its subcellular location is the virion. It localises to the host cytoplasm. Functionally, encapsidates the genome, protecting it from nucleases. The encapsidated genomic RNA is termed the nucleocapsid and serves as template for transcription and replication. During replication, encapsidation by NP is coupled to RNA synthesis and all replicative products are resistant to nucleases. This is Nucleoprotein (NP) from Lake Victoria marburgvirus (strain Ozolin-75) (MARV).